We begin with the raw amino-acid sequence, 234 residues long: Probable transcriptional regulatory protein PSPTO_3162 (234 aa).

It belongs to the TACO1 family.

The protein resides in the cytoplasm. The sequence is that of Probable transcriptional regulatory protein PSPTO_3162 from Pseudomonas syringae pv. tomato (strain ATCC BAA-871 / DC3000).